The sequence spans 183 residues: Phosphopantetheine adenylyltransferase (183 aa).

S8 lines the substrate pocket. ATP contacts are provided by residues 8–9 (SF) and H16. 3 residues coordinate substrate: K40, T72, and R86. Residues 87-89 (GLR), E97, and 122-128 (YSFLSSS) contribute to the ATP site.

The protein belongs to the bacterial CoaD family. In terms of assembly, homohexamer. Mg(2+) is required as a cofactor.

It is found in the cytoplasm. It carries out the reaction (R)-4'-phosphopantetheine + ATP + H(+) = 3'-dephospho-CoA + diphosphate. It functions in the pathway cofactor biosynthesis; coenzyme A biosynthesis; CoA from (R)-pantothenate: step 4/5. Functionally, reversibly transfers an adenylyl group from ATP to 4'-phosphopantetheine, yielding dephospho-CoA (dPCoA) and pyrophosphate. In Nostoc punctiforme (strain ATCC 29133 / PCC 73102), this protein is Phosphopantetheine adenylyltransferase.